A 404-amino-acid polypeptide reads, in one-letter code: Lupus La protein homolog (404 aa).

Residues 7 to 99 form the HTH La-type RNA-binding domain; it reads NEKMAALEAK…RRSPSKPLPE (93 aa). Phosphoserine is present on residues S92 and S94. The 77-residue stretch at 111–187 folds into the RRM domain; it reads RSVYIKGFPT…TDLLILFKED (77 aa). K116 carries the N6-acetyllysine modification. A Phosphothreonine modification is found at T120. K128 carries the N6-acetyllysine modification. The residue at position 225 (S225) is a Phosphoserine. The xRRM domain occupies 227–348; it reads EEKIGCLLKF…KGKGNKAAQA (122 aa). Residues K328 and K341 each carry the N6-acetyllysine modification. The segment covering 329–342 has biased composition (basic residues); sequence WKSKGRRFKGKGKG. Positions 329-404 are disordered; that stretch reads WKSKGRRFKG…QKTENGAGDQ (76 aa). The span at 343–354 shows a compositional bias: low complexity; that stretch reads NKAAQAGSAKGK. N6-acetyllysine is present on K360. Residue T362 is modified to Phosphothreonine. The residue at position 366 (S366) is a Phosphoserine. Over residues 381 to 391 the composition is skewed to basic and acidic residues; that stretch reads RAREETDKEPP.

In terms of assembly, interacts with DDX15. May interact with RUFY1. Post-translationally, phosphorylated in the C-terminal part of the protein.

The protein localises to the nucleus. Binds to the 3' poly(U) terminus of nascent RNA polymerase III transcripts, protecting them from exonuclease digestion and facilitating their folding and maturation. The protein is Lupus La protein homolog (SSB) of Bos taurus (Bovine).